A 142-amino-acid polypeptide reads, in one-letter code: Aspartate 1-decarboxylase (142 aa).

S25 (schiff-base intermediate with substrate; via pyruvic acid) is an active-site residue. S25 is subject to Pyruvic acid (Ser). A substrate-binding site is contributed by T57. Y58 acts as the Proton donor in catalysis. 73–75 (GAA) is a substrate binding site.

The protein belongs to the PanD family. As to quaternary structure, heterooctamer of four alpha and four beta subunits. It depends on pyruvate as a cofactor. In terms of processing, is synthesized initially as an inactive proenzyme, which is activated by self-cleavage at a specific serine bond to produce a beta-subunit with a hydroxyl group at its C-terminus and an alpha-subunit with a pyruvoyl group at its N-terminus.

The protein resides in the cytoplasm. It catalyses the reaction L-aspartate + H(+) = beta-alanine + CO2. It functions in the pathway cofactor biosynthesis; (R)-pantothenate biosynthesis; beta-alanine from L-aspartate: step 1/1. Its function is as follows. Catalyzes the pyruvoyl-dependent decarboxylation of aspartate to produce beta-alanine. The sequence is that of Aspartate 1-decarboxylase from Mycobacterium leprae (strain Br4923).